Here is a 77-residue protein sequence, read N- to C-terminus: Cell division topological specificity factor (77 aa).

This sequence belongs to the MinE family.

In terms of biological role, prevents the cell division inhibition by proteins MinC and MinD at internal division sites while permitting inhibition at polar sites. This ensures cell division at the proper site by restricting the formation of a division septum at the midpoint of the long axis of the cell. This is Cell division topological specificity factor from Helicobacter pylori (strain Shi470).